A 275-amino-acid polypeptide reads, in one-letter code: Formamidopyrimidine-DNA glycosylase (275 aa).

Pro-2 (schiff-base intermediate with DNA) is an active-site residue. Glu-3 acts as the Proton donor in catalysis. The active-site Proton donor; for beta-elimination activity is the Lys-58. Residues His-91 and Arg-110 each coordinate DNA. The segment at 238–272 (QVYGQTGKPCPRCGQAIVKLKVGGRGTHICPKCQK) adopts an FPG-type zinc-finger fold. Residue Arg-262 is the Proton donor; for delta-elimination activity of the active site.

It belongs to the FPG family. As to quaternary structure, monomer. Zn(2+) serves as cofactor.

The catalysed reaction is Hydrolysis of DNA containing ring-opened 7-methylguanine residues, releasing 2,6-diamino-4-hydroxy-5-(N-methyl)formamidopyrimidine.. It catalyses the reaction 2'-deoxyribonucleotide-(2'-deoxyribose 5'-phosphate)-2'-deoxyribonucleotide-DNA = a 3'-end 2'-deoxyribonucleotide-(2,3-dehydro-2,3-deoxyribose 5'-phosphate)-DNA + a 5'-end 5'-phospho-2'-deoxyribonucleoside-DNA + H(+). Involved in base excision repair of DNA damaged by oxidation or by mutagenic agents. Acts as a DNA glycosylase that recognizes and removes damaged bases. Has a preference for oxidized purines, such as 7,8-dihydro-8-oxoguanine (8-oxoG). Has AP (apurinic/apyrimidinic) lyase activity and introduces nicks in the DNA strand. Cleaves the DNA backbone by beta-delta elimination to generate a single-strand break at the site of the removed base with both 3'- and 5'-phosphates. The polypeptide is Formamidopyrimidine-DNA glycosylase (Streptococcus pyogenes serotype M18 (strain MGAS8232)).